An 84-amino-acid chain; its full sequence is Mitochondrial import inner membrane translocase subunit tim9 (84 aa).

Positions 35 to 59 (CFSDCVQDFTSSKLSNKESECIAKC) match the Twin CX3C motif motif. Cystine bridges form between cysteine 35–cysteine 59 and cysteine 39–cysteine 55.

It belongs to the small Tim family. As to quaternary structure, heterohexamer; composed of 3 copies of TIM9 and 3 copies of TIM10, named soluble 70 kDa complex. Associates with the TIM22 complex, whose core is composed of TIM22 and TIM54. Interacts with the transmembrane regions of multi-pass transmembrane proteins in transit.

Its subcellular location is the mitochondrion inner membrane. Its function is as follows. Mitochondrial intermembrane chaperone that participates in the import and insertion of multi-pass transmembrane proteins into the mitochondrial inner membrane. Also required for the transfer of beta-barrel precursors from the TOM complex to the sorting and assembly machinery (SAM complex) of the outer membrane. Acts as a chaperone-like protein that protects the hydrophobic precursors from aggregation and guide them through the mitochondrial intermembrane space. This is Mitochondrial import inner membrane translocase subunit tim9 (tim9) from Schizosaccharomyces pombe (strain 972 / ATCC 24843) (Fission yeast).